The chain runs to 185 residues: Uroplakin-2 (185 aa).

An N-terminal signal peptide occupies residues 1 to 26 (MASPWPVWTLSWILILLAVLVPGAAA). Positions 27 to 85 (DFNISSLSGLLSPVMTESLLVALPPCHLTGGNATLTVRRANDSKVVRSSFVVPPCRGRR) are excised as a propeptide. 3 N-linked (GlcNAc...) asparagine glycosylation sites follow: Asn-29, Asn-58, and Asn-67. Residues 86 to 156 (ELVSVVDSGS…IGLAMARTGG (71 aa)) are Lumenal-facing. The helical transmembrane segment at 157–177 (MVVITVLLSVAMFLLVLGLII) threads the bilayer. The Cytoplasmic segment spans residues 178 to 185 (ALALGARK).

This sequence belongs to the uroplakin-2 family. As to quaternary structure, interacts with uroplakin-1a (UPK1A). In terms of tissue distribution, bladder epithelium.

It is found in the cell membrane. Component of the asymmetric unit membrane (AUM); a highly specialized biomembrane elaborated by terminally differentiated urothelial cells. May play an important role in regulating the assembly of the AUM. This chain is Uroplakin-2 (UPK2), found in Bos taurus (Bovine).